We begin with the raw amino-acid sequence, 742 residues long: MATKYPKFSRDLAQDPTTRRIWYAIATGNDFESHDGMTEENLYQKIFATHFGHVAIIFLWASSLLFHVAWQGNFEQWIKDPLHIRPIAHAIWDPHFGKPAIEAFSQGGANYPVNIAYSGVYHWWYTIGMRTNNDLYQGSVFLLLLAALFLFAGWLHLQPKFRPSLTWFKSAEPRLNHHLAGLFGVSSLAWAGHLIHVAIPESRGVHVGWRNFLTTLPHPAGLTPFWTGNWGVYAQNADTTGHIFGTSQGAGTAILTFLGGFHPQTESLWLTDMAHHHLAIAVIFIIAGHMYRTNFGIGHSIKEMLNAKQFFGIRTEGQFNLPHQGLYDTYNNSLHFQLSIHLAALGTALSLVAQHMYSLPPYAFIAKDYTTQAALYTHHQYIAGFLMIGAFAHAGIFWIRDYDPEQNQGNVLDRVLKHKEAIISHLSWVSLFLGFHTLGIYVHNDVVVAFGTPEKQILIEPVFAQFIQAAHGKLLYGMDTLLSNPDSIAYTAWPNHANVWLPNWLDAINSGTNSLFLTIGPGDFLVHHAIALGLHTTTLICVKGALDARGTKLMPDKKDFGFTFPCDGPGRGGTCQTSSWEQSFYLALFWMLNLLGWVTFYWHWKHLGVWQGNVAQFNENSTYLMGWFRDYLWANSAQLINGYNPYGTNNLSVWAWMFLFGHLVWATGFMFLISWRGYWQELIETLVWAHERTPLANLVRWKDKPVALSIVQGWLVGLAHFTVGYILTYAAFLIASTAGKFG.

Transmembrane regions (helical) follow at residues 46 to 69, 135 to 158, 175 to 199, 273 to 291, 334 to 357, 373 to 399, 421 to 443, and 524 to 542; these read IFAT…FHVA, LYQG…LHLQ, LNHH…HVAI, MAHH…GHMY, LHFQ…QHMY, AALY…IFWI, AIIS…IYVH, and FLVH…LICV. Positions 566 and 575 each coordinate [4Fe-4S] cluster. The next 2 membrane-spanning stretches (helical) occupy residues 583 to 604 and 651 to 673; these read SFYL…YWHW and LSVW…MFLI. Residues His662, Met670, and Tyr678 each coordinate chlorophyll a. Phylloquinone is bound at residue Trp679. The chain crosses the membrane as a helical span at residues 715-735; sequence LVGLAHFTVGYILTYAAFLIA.

This sequence belongs to the PsaA/PsaB family. In terms of assembly, the PsaA/B heterodimer binds the P700 chlorophyll special pair and subsequent electron acceptors. PSI consists of a core antenna complex that captures photons, and an electron transfer chain that converts photonic excitation into a charge separation. The cyanobacterial PSI reaction center is composed of one copy each of PsaA,B,C,D,E,F,I,J,K,L,M and X, and forms trimeric complexes. It depends on PSI electron transfer chain: 5 chlorophyll a, 1 chlorophyll a', 2 phylloquinones and 3 4Fe-4S clusters. PSI core antenna: 90 chlorophyll a, 22 carotenoids, 3 phospholipids and 1 galactolipid. P700 is a chlorophyll a/chlorophyll a' dimer, A0 is one or more chlorophyll a, A1 is one or both phylloquinones and FX is a shared 4Fe-4S iron-sulfur center. as a cofactor.

It localises to the cellular thylakoid membrane. The catalysed reaction is reduced [plastocyanin] + hnu + oxidized [2Fe-2S]-[ferredoxin] = oxidized [plastocyanin] + reduced [2Fe-2S]-[ferredoxin]. Its function is as follows. PsaA and PsaB bind P700, the primary electron donor of photosystem I (PSI), as well as the electron acceptors A0, A1 and FX. PSI is a plastocyanin/cytochrome c6-ferredoxin oxidoreductase, converting photonic excitation into a charge separation, which transfers an electron from the donor P700 chlorophyll pair to the spectroscopically characterized acceptors A0, A1, FX, FA and FB in turn. Oxidized P700 is reduced on the lumenal side of the thylakoid membrane by plastocyanin or cytochrome c6. In Nostoc sp. (strain PCC 7120 / SAG 25.82 / UTEX 2576), this protein is Photosystem I P700 chlorophyll a apoprotein A2 2 (psaB2).